We begin with the raw amino-acid sequence, 280 residues long: Fructose-1,6-bisphosphatase/inositol-1-monophosphatase (280 aa).

Mg(2+) contacts are provided by Glu-73, Asp-94, Leu-96, and Asp-97. Residues 97–99 (DGT), Arg-195, Val-200, and Arg-219 contribute to the substrate site. Mg(2+) is bound at residue Asp-226.

The protein belongs to the inositol monophosphatase superfamily. FBPase class 4 family. Requires Mg(2+) as cofactor.

It carries out the reaction beta-D-fructose 1,6-bisphosphate + H2O = beta-D-fructose 6-phosphate + phosphate. The catalysed reaction is a myo-inositol phosphate + H2O = myo-inositol + phosphate. Functionally, phosphatase with broad specificity; it can dephosphorylate fructose 1,6-bisphosphate, and both D and L isomers of inositol-1-phosphate (I-1-P). The chain is Fructose-1,6-bisphosphatase/inositol-1-monophosphatase (suhB) from Methanothermobacter thermautotrophicus (strain ATCC 29096 / DSM 1053 / JCM 10044 / NBRC 100330 / Delta H) (Methanobacterium thermoautotrophicum).